Consider the following 209-residue polypeptide: 7-carboxy-7-deazaguanine synthase (209 aa).

Substrate is bound by residues 10-12 and arginine 25; that span reads IQG. The Radical SAM core domain occupies 16–205; it reads YAGLPMLFVR…PQIHKIIYGD (190 aa). [4Fe-4S] cluster contacts are provided by cysteine 29, cysteine 33, and cysteine 36. Position 38 (threonine 38) interacts with Mg(2+). Threonine 68 serves as a coordination point for substrate. Glycine 70 is a binding site for S-adenosyl-L-methionine.

It belongs to the radical SAM superfamily. 7-carboxy-7-deazaguanine synthase family. Homodimer. Requires [4Fe-4S] cluster as cofactor. The cofactor is S-adenosyl-L-methionine. It depends on Mg(2+) as a cofactor.

It catalyses the reaction 6-carboxy-5,6,7,8-tetrahydropterin + H(+) = 7-carboxy-7-deazaguanine + NH4(+). It functions in the pathway purine metabolism; 7-cyano-7-deazaguanine biosynthesis. Functionally, catalyzes the complex heterocyclic radical-mediated conversion of 6-carboxy-5,6,7,8-tetrahydropterin (CPH4) to 7-carboxy-7-deazaguanine (CDG), a step common to the biosynthetic pathways of all 7-deazapurine-containing compounds. This is 7-carboxy-7-deazaguanine synthase from Thermoplasma acidophilum (strain ATCC 25905 / DSM 1728 / JCM 9062 / NBRC 15155 / AMRC-C165).